The chain runs to 329 residues: MSKPAMRVAVTGAAGQIGYALLFRIASGEMLGKDQPVILQLLEIPDEKAQKALKGVIMELDDCAFPLLQEVTAHSDPRTAFKDADVALLVGARPRGPGMERKDLLSVNAQIFTAQGKALNDVASRNVKVLVVGNPANTNAYIAMKSAPDLPAKNFTAMLRLDHNRALSQLAAKSGKAVADIEKLVVWGNHSPTMYPDYRFATVGGQSLAKLINDDAWNRDTFIPTVGKRGAAIIEARGLSSAASAANAAIDHVRDWVLGSNGKWVTMGIPSDGSYGIPEGIIYGVPVTTENGEYKRVEGLEIDAFSRERLDFTLKELLEERDGVKDLLK.

12–18 (GAAGQIG) provides a ligand contact to NAD(+). Arg95 and Arg101 together coordinate substrate. Residues Asn108, Gln115, and 132–134 (VGN) contribute to the NAD(+) site. 2 residues coordinate substrate: Asn134 and Arg165. His190 functions as the Proton acceptor in the catalytic mechanism.

Belongs to the LDH/MDH superfamily. MDH type 2 family.

It catalyses the reaction (S)-malate + NAD(+) = oxaloacetate + NADH + H(+). In terms of biological role, catalyzes the reversible oxidation of malate to oxaloacetate. The protein is Malate dehydrogenase of Bordetella petrii (strain ATCC BAA-461 / DSM 12804 / CCUG 43448).